Reading from the N-terminus, the 826-residue chain is Lon protease (826 aa).

The region spanning 26–221 (LPMLPVRDVV…AVNGFVSREV (196 aa)) is the Lon N-terminal domain. 373–380 (GPPGVGKT) lines the ATP pocket. The 182-residue stretch at 609-790 (EPQIGLATGL…NEVLEKALLP (182 aa)) folds into the Lon proteolytic domain. Catalysis depends on residues S696 and K739. Residues 788-826 (LLPAEKKKAPPKKKPPKKAAKPKAKKTQPKAKTTEAADK) form a disordered region. Positions 796–816 (APPKKKPPKKAAKPKAKKTQP) are enriched in basic residues.

Belongs to the peptidase S16 family. Homohexamer. Organized in a ring with a central cavity.

It is found in the cytoplasm. It carries out the reaction Hydrolysis of proteins in presence of ATP.. ATP-dependent serine protease that mediates the selective degradation of mutant and abnormal proteins as well as certain short-lived regulatory proteins. Required for cellular homeostasis and for survival from DNA damage and developmental changes induced by stress. Degrades polypeptides processively to yield small peptide fragments that are 5 to 10 amino acids long. Binds to DNA in a double-stranded, site-specific manner. In Desulfatibacillum aliphaticivorans, this protein is Lon protease.